The primary structure comprises 874 residues: Envelope glycoprotein B (874 aa).

A signal peptide spans 1 to 25 (MGVGGGPRVVLCLWCVAALLCQGVA). Residues 26–727 (QEVVAETTTP…SGVISFFKNP (702 aa)) lie on the Virion surface side of the membrane. Intrachain disulfides connect Cys59–Cys523, Cys77–Cys479, Cys149–Cys214, Cys306–Cys353, and Cys546–Cys583. An involved in fusion and/or binding to host membrane region spans residues 116-122 (IYKGWSE). A glycan (N-linked (GlcNAc...) asparagine; by host) is linked at Asn171. Residues 200 to 208 (RNLLWSYTT) form an involved in fusion and/or binding to host membrane region. N-linked (GlcNAc...) asparagine; by host glycans are attached at residues Asn247, Asn281, Asn302, Asn323, Asn348, Asn356, Asn376, Asn409, Asn412, Asn444, Asn558, Asn610, and Asn624. The segment at 412–450 (NATASPTSTPTTSPRRRRRDTSSVSGGGNNGDNSTKEES) is disordered. A hydrophobic membrane proximal region region spans residues 673–725 (LDDSIDHGRDSFIQTLGDIMQDLGTIGKVVVNVASGVFSLFGSIVSGVISFFK). Residues 728–748 (FGGMLLIVLIIAGVVVVYLFM) traverse the membrane as a helical segment. Residues 749–874 (TRSRSIYSAP…VEAGTADTGV (126 aa)) are Intravirion-facing. The tract at residues 830 to 874 (RRGGGGYQRLQRDGSDDEGDYEPLRRQDGGYDDVDVEAGTADTGV) is disordered. Residues 836-839 (YQRL) carry the Internalization motif motif.

This sequence belongs to the herpesviridae glycoprotein B family. In terms of assembly, homotrimer; disulfide-linked. Binds to heparan sulfate proteoglycans. Interacts with gH/gL heterodimer. In terms of processing, a proteolytic cleavage by host furin generates two subunits that remain linked by disulfide bonds.

It is found in the virion membrane. The protein resides in the host cell membrane. The protein localises to the host endosome membrane. Its subcellular location is the host Golgi apparatus membrane. Envelope glycoprotein that forms spikes at the surface of virion envelope. Essential for the initial attachment to heparan sulfate moieties of the host cell surface proteoglycans. Involved in fusion of viral and cellular membranes leading to virus entry into the host cell. Following initial binding to its host receptors, membrane fusion is mediated by the fusion machinery composed at least of gB and the heterodimer gH/gL. May be involved in the fusion between the virion envelope and the outer nuclear membrane during virion egress. The chain is Envelope glycoprotein B from Equus caballus (Horse).